A 458-amino-acid chain; its full sequence is Sulfite exporter TauE/SafE family protein 2 (458 aa).

Transmembrane regions (helical) follow at residues 5-25 (FVPI…EQEP), 53-73 (IELT…SSIS), 74-94 (SAGG…VAGL), 101-121 (SFSA…NLFV), 128-148 (GKTL…LLGV), 150-170 (IGVI…FAVF), 227-247 (FPWI…AVYL), 267-287 (YWLI…WICF), 324-344 (VMAL…GMLI), 348-368 (LLQV…MVLF), 386-406 (GTAS…LKVV), and 418-438 (IIVF…TSYG).

It belongs to the 4-toluene sulfonate uptake permease (TSUP) (TC 2.A.102) family.

It localises to the membrane. This Arabidopsis thaliana (Mouse-ear cress) protein is Sulfite exporter TauE/SafE family protein 2.